Reading from the N-terminus, the 406-residue chain is Phosphatidylinositol 5-phosphate 4-kinase type-2 alpha (406 aa).

An N-acetylalanine modification is found at alanine 2. Threonine 3 carries the post-translational modification Phosphothreonine. The residue at position 14 (serine 14) is a Phosphoserine. The PIPK domain occupies 33–405 (ASDPLLSVLM…RFLDFIGHIL (373 aa)). Residues 59–65 (VMLMPDD) are required for interaction with PIP5K1A. N6-acetyllysine occurs at positions 89 and 145. The segment at 288-329 (QEEVECEENDGEEEGESDGTHPVGTPPDSPGNTLNSSPPLAP) is disordered. Positions 289–304 (EEVECEENDGEEEGES) are enriched in acidic residues.

Homodimer. Interacts with PIP4K2B; the interaction may regulate localization to the nucleus. Probably interacts with PIP5K1A; the interaction inhibits PIP5K1A kinase activity. Phosphorylated in tyrosines. Phosphorylation is induced by light and increases kinase activity. Expressed ubiquitously, with high levels in the brain. Present in most tissues, except notably skeletal muscle and small intestine.

The protein localises to the cell membrane. The protein resides in the nucleus. Its subcellular location is the lysosome. It is found in the cytoplasm. It localises to the photoreceptor inner segment. The protein localises to the cell projection. The protein resides in the cilium. Its subcellular location is the photoreceptor outer segment. It catalyses the reaction a 1,2-diacyl-sn-glycero-3-phospho-(1D-myo-inositol-5-phosphate) + ATP = a 1,2-diacyl-sn-glycero-3-phospho-(1D-myo-inositol-4,5-bisphosphate) + ADP + H(+). The catalysed reaction is 1,2-dihexadecanoyl-sn-glycero-3-phospho-(1D-myo-inositol-5-phosphate) + ATP = 1,2-dihexadecanoyl-sn-glycero-3-phospho-(1D-myo-inositol-4,5-bisphosphate) + ADP + H(+). It carries out the reaction 1,2-dihexadecanoyl-sn-glycero-3-phospho-(1D-myo-inositol-5-phosphate) + GTP = 1,2-dihexadecanoyl-sn-glycero-3-phospho-(1D-myo-inositol-4,5-bisphosphate) + GDP + H(+). In rod outer segments, activated by light. Inhibited by I-OMe tyrphostin AG-538 (I-OMe-AG-538), acting as an ATP-competitive inhibitor. Functionally, catalyzes the phosphorylation of phosphatidylinositol 5-phosphate (PtdIns5P) on the fourth hydroxyl of the myo-inositol ring, to form phosphatidylinositol 4,5-bisphosphate (PtdIns(4,5)P2). Has both ATP- and GTP-dependent kinase activities. May exert its function by regulating the levels of PtdIns5P, which functions in the cytosol by increasing AKT activity and in the nucleus signals through ING2. May regulate the pool of cytosolic PtdIns5P in response to the activation of tyrosine phosphorylation. Required for lysosome-peroxisome membrane contacts and intracellular cholesterol transport through modulating peroxisomal PtdIns(4,5)P2 level. In collaboration with PIP4K2B, has a role in mediating autophagy in times of nutrient stress. Required for autophagosome-lysosome fusion and the regulation of cellular lipid metabolism. May be involved in thrombopoiesis, and the terminal maturation of megakaryocytes and regulation of their size. Negatively regulates insulin signaling through a catalytic-independent mechanism. PIP4Ks interact with PIP5Ks and suppress PIP5K-mediated PtdIns(4,5)P2 synthesis and insulin-dependent conversion to PtdIns(3,4,5)P3. This is Phosphatidylinositol 5-phosphate 4-kinase type-2 alpha from Homo sapiens (Human).